The primary structure comprises 881 residues: Fanconi anemia core complex-associated protein 100 (881 aa).

Residues 94–119 (GRSRSTSQDDRDSEDGDQPSPVIPVD) are disordered. Residue Ser667 is modified to Phosphoserine.

As to quaternary structure, belongs to the multisubunit FA complex composed of FANCA, FANCB, FANCC, FANCE, FANCF, FANCG, FANCL/PHF9, FANCM, FAAP24 and FAAP100. Forms a subcomplex with FANCB and FANCL.

The protein localises to the nucleus. Its function is as follows. Plays a role in Fanconi anemia-associated DNA damage response network. Regulates FANCD2 monoubiquitination and the stability of the FA core complex. Induces chromosomal instability as well as hypersensitivity to DNA cross-linking agents, when repressed. In Homo sapiens (Human), this protein is Fanconi anemia core complex-associated protein 100.